Here is a 382-residue protein sequence, read N- to C-terminus: Deoxyhypusine synthase (382 aa).

NAD(+) contacts are provided by residues 108-112 (SNLIS), 134-136 (TAG), Glu140, and Asp257. Residue 139 to 140 (EE) coordinates spermidine. Asp262 provides a ligand contact to spermidine. Gly304 contacts NAD(+). His309 contributes to the spermidine binding site. 329-330 (TG) is a binding site for NAD(+). Spermidine is bound by residues 335-337 (GSD) and 344-350 (EAVSWGK). The active-site Nucleophile is the Lys350. 363-364 (DV) is a binding site for NAD(+).

It belongs to the deoxyhypusine synthase family. NAD(+) is required as a cofactor.

It catalyses the reaction [eIF5A protein]-L-lysine + spermidine = [eIF5A protein]-deoxyhypusine + propane-1,3-diamine. Its pathway is protein modification; eIF5A hypusination. Catalyzes the NAD-dependent oxidative cleavage of spermidine and the subsequent transfer of the butylamine moiety of spermidine to the epsilon-amino group of a specific lysine residue of the eIF-5A precursor protein to form the intermediate deoxyhypusine residue. This is Deoxyhypusine synthase (DYS1) from Eremothecium gossypii (strain ATCC 10895 / CBS 109.51 / FGSC 9923 / NRRL Y-1056) (Yeast).